Reading from the N-terminus, the 426-residue chain is Glutamate-1-semialdehyde 2,1-aminomutase (426 aa).

K265 carries the N6-(pyridoxal phosphate)lysine modification.

This sequence belongs to the class-III pyridoxal-phosphate-dependent aminotransferase family. HemL subfamily. In terms of assembly, homodimer. It depends on pyridoxal 5'-phosphate as a cofactor.

It is found in the cytoplasm. It catalyses the reaction (S)-4-amino-5-oxopentanoate = 5-aminolevulinate. The protein operates within porphyrin-containing compound metabolism; protoporphyrin-IX biosynthesis; 5-aminolevulinate from L-glutamyl-tRNA(Glu): step 2/2. This is Glutamate-1-semialdehyde 2,1-aminomutase from Hydrogenovibrio crunogenus (strain DSM 25203 / XCL-2) (Thiomicrospira crunogena).